Consider the following 169-residue polypeptide: S-ribosylhomocysteine lyase (169 aa).

Fe cation contacts are provided by histidine 54, histidine 58, and cysteine 128.

Belongs to the LuxS family. Homodimer. Requires Fe cation as cofactor.

The enzyme catalyses S-(5-deoxy-D-ribos-5-yl)-L-homocysteine = (S)-4,5-dihydroxypentane-2,3-dione + L-homocysteine. In terms of biological role, involved in the synthesis of autoinducer 2 (AI-2) which is secreted by bacteria and is used to communicate both the cell density and the metabolic potential of the environment. The regulation of gene expression in response to changes in cell density is called quorum sensing. Catalyzes the transformation of S-ribosylhomocysteine (RHC) to homocysteine (HC) and 4,5-dihydroxy-2,3-pentadione (DPD). In Shewanella amazonensis (strain ATCC BAA-1098 / SB2B), this protein is S-ribosylhomocysteine lyase.